The following is a 248-amino-acid chain: Isoprenyl transferase (248 aa).

The active site involves Asp-23. Residue Asp-23 participates in Mg(2+) binding. Substrate contacts are provided by residues 24–27 (GNGR), Trp-28, Arg-36, His-40, and 68–70 (STE). Asn-71 serves as the catalytic Proton acceptor. Substrate-binding positions include Trp-72, Arg-74, Arg-185, and 191-193 (RIS). Glu-204 is a Mg(2+) binding site.

This sequence belongs to the UPP synthase family. In terms of assembly, homodimer. Mg(2+) is required as a cofactor.

In terms of biological role, catalyzes the condensation of isopentenyl diphosphate (IPP) with allylic pyrophosphates generating different type of terpenoids. The chain is Isoprenyl transferase from Neisseria gonorrhoeae (strain ATCC 700825 / FA 1090).